A 660-amino-acid chain; its full sequence is Kinesin-like protein KIF2A (660 aa).

The interval 1-140 is disordered; it reads MVTSLNEDNE…QQELREKRAQ (140 aa). A globular region spans residues 1–171; that stretch reads MVTSLNEDNE…LDYRPLTTAD (171 aa). Position 48 is a phosphoserine (Ser-48). 2 positions are modified to phosphothreonine: Thr-51 and Thr-70. Ser-73 carries the post-translational modification Phosphoserine. Lys-75 carries the post-translational modification N6-acetyllysine. Positions 96–106 are enriched in polar residues; sequence LPEQSSSAQQN. Residues 113 to 140 show a composition bias toward basic and acidic residues; that stretch reads CVKEVEKLQEKREKRRLQQQELREKRAQ. Residues 177–507 form the Kinesin motor domain; the sequence is RICVCVRKRP…LRYANRVKEL (331 aa). 267–274 contacts ATP; it reads GQTGSGKT. Positions 614 to 653 form a coiled coil; that stretch reads ATQLEAILEQKIDILTELRDKVKSFRAALQEEEQASKQIN.

It belongs to the TRAFAC class myosin-kinesin ATPase superfamily. Kinesin family. MCAK/KIF2 subfamily. In terms of assembly, interacts with AURKA and PLK1. Interacts with PSRC1. Interacts with MCRS1; the interaction enhances recruitment of KIF2A to the minus ends of spindle microtubules which promotes chromosome alignment.

The protein resides in the cytoplasm. Its subcellular location is the cytoskeleton. It is found in the microtubule organizing center. It localises to the centrosome. The protein localises to the spindle pole. The protein resides in the spindle. Plus end-directed microtubule-dependent motor required for normal brain development. May regulate microtubule dynamics during axonal growth. Required for normal progression through mitosis. Required for normal congress of chromosomes at the metaphase plate. Required for normal spindle dynamics during mitosis. Promotes spindle turnover. Implicated in formation of bipolar mitotic spindles. Has microtubule depolymerization activity. This Bos taurus (Bovine) protein is Kinesin-like protein KIF2A (KIF2A).